A 466-amino-acid polypeptide reads, in one-letter code: MITLYNTLTRQKETFEPIEPGKVKMYVCGPTVYNYIHIGNARPAINYDVVRRYFEYKGYEVIYVSNFTDVDDKLINRSKELNESVPDIADRYIKAFYEDVGALNVKKATSNPRVMNHMDEIIDFIKELVDEGYAYESDGDVYFRTRKFEGYGKLSHQSLDDLKVGARIEAGEQKEDALDFTLWKKAKPGEISWESPFGEGRPGWHIECSVMAFHELGKTIDIHAGGSDLQFPHHENEIAQSEAHNHAPFANYWMHNGFINIDNEKMSKSLGNFILVHDIIKEVDPDVLRFFMISVHYRSPINYNLELVNAAKSGLERIRNSYQLIEERETIATDIVDQSKYIEQIDAIIEQFETVMDDDFNTANAVTAWYDLSKLANKYVLENNTSTQVISRFKEVYQIFSDVLGVPLKGNKSDMLLDEDIEKLIEERNEARKNKDFARADEIRDMLKEQNIILEDTPQGVRFKRG.

Cys28 serves as a coordination point for Zn(2+). Positions Pro30–Asn40 match the 'HIGH' region motif. The Zn(2+) site is built by Cys208, His233, and Glu237. Positions Lys265–Ser269 match the 'KMSKS' region motif. Lys268 is an ATP binding site.

This sequence belongs to the class-I aminoacyl-tRNA synthetase family. Monomer. Requires Zn(2+) as cofactor.

The protein resides in the cytoplasm. The enzyme catalyses tRNA(Cys) + L-cysteine + ATP = L-cysteinyl-tRNA(Cys) + AMP + diphosphate. The chain is Cysteine--tRNA ligase from Staphylococcus haemolyticus (strain JCSC1435).